The primary structure comprises 430 residues: Phosphomethylpyrimidine synthase (430 aa).

Residues Asn67, Met96, Tyr125, His161, 183-185 (SRG), 224-227 (DALR), and Glu263 each bind substrate. Residue His267 participates in Zn(2+) binding. Tyr290 contributes to the substrate binding site. Residue His331 participates in Zn(2+) binding. Residues Cys406, Cys409, and Cys413 each coordinate [4Fe-4S] cluster.

Belongs to the ThiC family. As to quaternary structure, homodimer. It depends on [4Fe-4S] cluster as a cofactor.

It carries out the reaction 5-amino-1-(5-phospho-beta-D-ribosyl)imidazole + S-adenosyl-L-methionine = 4-amino-2-methyl-5-(phosphooxymethyl)pyrimidine + CO + 5'-deoxyadenosine + formate + L-methionine + 3 H(+). The protein operates within cofactor biosynthesis; thiamine diphosphate biosynthesis. Its function is as follows. Catalyzes the synthesis of the hydroxymethylpyrimidine phosphate (HMP-P) moiety of thiamine from aminoimidazole ribotide (AIR) in a radical S-adenosyl-L-methionine (SAM)-dependent reaction. The protein is Phosphomethylpyrimidine synthase of Campylobacter jejuni subsp. doylei (strain ATCC BAA-1458 / RM4099 / 269.97).